The chain runs to 197 residues: Phosphoheptose isomerase (197 aa).

The region spanning 36–197 (MVNALLNEGK…IDSQLFGSEE (162 aa)) is the SIS domain. 51 to 53 (NGG) lines the substrate pocket. Positions 60 and 64 each coordinate Zn(2+). Substrate is bound by residues glutamate 64, 93 to 94 (ND), 119 to 121 (STS), serine 124, and glutamine 174. Zn(2+)-binding residues include glutamine 174 and histidine 182.

It belongs to the SIS family. GmhA subfamily. As to quaternary structure, homotetramer. It depends on Zn(2+) as a cofactor.

The protein localises to the cytoplasm. The catalysed reaction is 2 D-sedoheptulose 7-phosphate = D-glycero-alpha-D-manno-heptose 7-phosphate + D-glycero-beta-D-manno-heptose 7-phosphate. The protein operates within carbohydrate biosynthesis; D-glycero-D-manno-heptose 7-phosphate biosynthesis; D-glycero-alpha-D-manno-heptose 7-phosphate and D-glycero-beta-D-manno-heptose 7-phosphate from sedoheptulose 7-phosphate: step 1/1. Its function is as follows. Catalyzes the isomerization of sedoheptulose 7-phosphate in D-glycero-D-manno-heptose 7-phosphate. This is Phosphoheptose isomerase from Pseudomonas fluorescens (strain Pf0-1).